Here is a 427-residue protein sequence, read N- to C-terminus: Adenylosuccinate synthetase (427 aa).

Residues Gly12–Lys18 and Gly40–Thr42 each bind GTP. The active-site Proton acceptor is Asp13. Mg(2+)-binding residues include Asp13 and Gly40. Residues Asp13–Lys16, Asn38–His41, Thr128, Arg142, Gln223, Thr238, and Arg302 each bind IMP. The active-site Proton donor is His41. Thr298 to Arg304 is a binding site for substrate. Residues Arg304, Arg330 to Asp332, and Ser412 to Gly414 contribute to the GTP site.

It belongs to the adenylosuccinate synthetase family. As to quaternary structure, homodimer. It depends on Mg(2+) as a cofactor.

The protein localises to the cytoplasm. The enzyme catalyses IMP + L-aspartate + GTP = N(6)-(1,2-dicarboxyethyl)-AMP + GDP + phosphate + 2 H(+). Its pathway is purine metabolism; AMP biosynthesis via de novo pathway; AMP from IMP: step 1/2. In terms of biological role, plays an important role in the de novo pathway of purine nucleotide biosynthesis. Catalyzes the first committed step in the biosynthesis of AMP from IMP. The protein is Adenylosuccinate synthetase of Brachyspira hyodysenteriae (strain ATCC 49526 / WA1).